The following is a 162-amino-acid chain: Photosystem II extrinsic protein V (162 aa).

A signal peptide spans 1–26 (MLKRYMLLAVATVFFAFQVLTSTATA). Heme c-binding residues include Cys-62, Cys-65, His-66, and His-117.

This sequence belongs to the cytochrome c family. PsbV subfamily. In terms of assembly, PSII is composed of 1 copy each of membrane proteins PsbA, PsbB, PsbC, PsbD, PsbE, PsbF, PsbH, PsbI, PsbJ, PsbK, PsbL, PsbM, PsbT, PsbX, PsbY, PsbZ, Psb30/Ycf12, peripheral proteins PsbO, CyanoQ (PsbQ), PsbU, PsbV and a large number of cofactors. It forms dimeric complexes. Requires heme c as cofactor.

It localises to the cellular thylakoid membrane. Its function is as follows. One of the extrinsic, lumenal subunits of photosystem II (PSII). PSII is a light-driven water plastoquinone oxidoreductase, using light energy to abstract electrons from H(2)O, generating a proton gradient subsequently used for ATP formation. The extrinsic proteins stabilize the structure of photosystem II oxygen-evolving complex (OEC), the ion environment of oxygen evolution and protect the OEC against heat-induced inactivation. Low-potential cytochrome c that plays a role in the OEC of PSII. The polypeptide is Photosystem II extrinsic protein V (Acaryochloris marina (strain MBIC 11017)).